Reading from the N-terminus, the 302-residue chain is Lipoyl synthase (302 aa).

Residues Cys44, Cys49, Cys55, Cys70, Cys74, Cys77, and Ser283 each coordinate [4Fe-4S] cluster. The region spanning 56–272 is the Radical SAM core domain; sequence WSKKHATVMI…ARVAKSKGFL (217 aa).

This sequence belongs to the radical SAM superfamily. Lipoyl synthase family. It depends on [4Fe-4S] cluster as a cofactor.

It localises to the cytoplasm. It carries out the reaction [[Fe-S] cluster scaffold protein carrying a second [4Fe-4S](2+) cluster] + N(6)-octanoyl-L-lysyl-[protein] + 2 oxidized [2Fe-2S]-[ferredoxin] + 2 S-adenosyl-L-methionine + 4 H(+) = [[Fe-S] cluster scaffold protein] + N(6)-[(R)-dihydrolipoyl]-L-lysyl-[protein] + 4 Fe(3+) + 2 hydrogen sulfide + 2 5'-deoxyadenosine + 2 L-methionine + 2 reduced [2Fe-2S]-[ferredoxin]. It participates in protein modification; protein lipoylation via endogenous pathway; protein N(6)-(lipoyl)lysine from octanoyl-[acyl-carrier-protein]: step 2/2. In terms of biological role, catalyzes the radical-mediated insertion of two sulfur atoms into the C-6 and C-8 positions of the octanoyl moiety bound to the lipoyl domains of lipoate-dependent enzymes, thereby converting the octanoylated domains into lipoylated derivatives. This Orientia tsutsugamushi (strain Ikeda) (Rickettsia tsutsugamushi) protein is Lipoyl synthase.